Here is an 87-residue protein sequence, read N- to C-terminus: Cell division topological specificity factor (87 aa).

Belongs to the MinE family.

Its function is as follows. Prevents the cell division inhibition by proteins MinC and MinD at internal division sites while permitting inhibition at polar sites. This ensures cell division at the proper site by restricting the formation of a division septum at the midpoint of the long axis of the cell. In Clostridium botulinum (strain ATCC 19397 / Type A), this protein is Cell division topological specificity factor.